Here is a 311-residue protein sequence, read N- to C-terminus: Chalcone synthase 4 (311 aa).

Residue Cys-164 is part of the active site.

Belongs to the thiolase-like superfamily. Chalcone/stilbene synthases family.

The catalysed reaction is (E)-4-coumaroyl-CoA + 3 malonyl-CoA + 3 H(+) = 2',4,4',6'-tetrahydroxychalcone + 3 CO2 + 4 CoA. The protein operates within secondary metabolite biosynthesis; flavonoid biosynthesis. Functionally, the primary product of this enzyme is 4,2',4',6'-tetrahydroxychalcone (also termed naringenin-chalcone or chalcone) which can under specific conditions spontaneously isomerize into naringenin. In Trifolium subterraneum (Subterranean clover), this protein is Chalcone synthase 4 (CHS4).